A 388-amino-acid polypeptide reads, in one-letter code: FBD-associated F-box protein At5g60610 (388 aa).

Positions 1–47 (MDRISGLPDELLVKIISFVPTKVAVSTSILSKRWESLWKWVPKLECD) constitute an F-box domain. An FBD domain is found at 337-388 (NWKNIQRSVPKCLKSSLKTLEFAGYTARPEERDFLSFIFKKARCLKTSSISH).

This chain is FBD-associated F-box protein At5g60610, found in Arabidopsis thaliana (Mouse-ear cress).